We begin with the raw amino-acid sequence, 376 residues long: Glutamate 5-kinase (376 aa).

Lys16 lines the ATP pocket. Ser56, Asp143, and Asn155 together coordinate substrate. Position 175–176 (175–176 (TD)) interacts with ATP. The region spanning 283 to 361 (RGALSLDEGA…RDIETTLGYV (79 aa)) is the PUA domain.

The protein belongs to the glutamate 5-kinase family.

The protein resides in the cytoplasm. It catalyses the reaction L-glutamate + ATP = L-glutamyl 5-phosphate + ADP. Its pathway is amino-acid biosynthesis; L-proline biosynthesis; L-glutamate 5-semialdehyde from L-glutamate: step 1/2. In terms of biological role, catalyzes the transfer of a phosphate group to glutamate to form L-glutamate 5-phosphate. In Halorhodospira halophila (strain DSM 244 / SL1) (Ectothiorhodospira halophila (strain DSM 244 / SL1)), this protein is Glutamate 5-kinase.